The following is a 295-amino-acid chain: Bifunctional protein FolD (295 aa).

Residues 166-168 (GRS), Ser-191, and Ile-232 each bind NADP(+).

It belongs to the tetrahydrofolate dehydrogenase/cyclohydrolase family. As to quaternary structure, homodimer.

The catalysed reaction is (6R)-5,10-methylene-5,6,7,8-tetrahydrofolate + NADP(+) = (6R)-5,10-methenyltetrahydrofolate + NADPH. It catalyses the reaction (6R)-5,10-methenyltetrahydrofolate + H2O = (6R)-10-formyltetrahydrofolate + H(+). It participates in one-carbon metabolism; tetrahydrofolate interconversion. In terms of biological role, catalyzes the oxidation of 5,10-methylenetetrahydrofolate to 5,10-methenyltetrahydrofolate and then the hydrolysis of 5,10-methenyltetrahydrofolate to 10-formyltetrahydrofolate. In Rhodopseudomonas palustris (strain HaA2), this protein is Bifunctional protein FolD.